The chain runs to 116 residues: Biogenesis of lysosome-related organelles complex 1 subunit CNL1 (116 aa).

The stretch at 63–95 (DIVDVNIQSFKDILSKCEELENYFTMLDQIEMI) forms a coiled coil.

It belongs to the BLOC1S4 family. In terms of assembly, component of the biogenesis of lysosome-related organelles complex-1 (BLOC-1).

Its subcellular location is the cytoplasm. Component of the biogenesis of lysosome-related organelles complex-1 (BLOC-1), a complex that is involved in endosomal cargo sorting. In Vanderwaltozyma polyspora (strain ATCC 22028 / DSM 70294 / BCRC 21397 / CBS 2163 / NBRC 10782 / NRRL Y-8283 / UCD 57-17) (Kluyveromyces polysporus), this protein is Biogenesis of lysosome-related organelles complex 1 subunit CNL1 (CLN1).